Here is a 330-residue protein sequence, read N- to C-terminus: 2-methoxy-6-polyprenyl-1,4-benzoquinol methylase, mitochondrial (330 aa).

The N-terminal 42 residues, 1–42 (MAAPRSWALWSFCGCGWSRAVSGCRLPGLRSSSPRGPLGARL), are a transit peptide targeting the mitochondrion. Residues threonine 117, aspartate 171, and 199–200 (DA) contribute to the S-adenosyl-L-methionine site.

The protein belongs to the class I-like SAM-binding methyltransferase superfamily. MenG/UbiE family. Component of a multi-subunit COQ enzyme complex, composed of at least COQ3, COQ4, COQ5, COQ6, COQ7 and COQ9. Interacts with PYURF; the interaction is direct, stabilizes COQ5 protein and associates PYURF with COQ enzyme complex.

The protein localises to the mitochondrion inner membrane. The enzyme catalyses 2-methoxy-6-(all-trans-decaprenyl)benzene-1,4-diol + S-adenosyl-L-methionine = 5-methoxy-2-methyl-3-(all-trans-decaprenyl)benzene-1,4-diol + S-adenosyl-L-homocysteine + H(+). Its pathway is cofactor biosynthesis; ubiquinone biosynthesis. Methyltransferase required for the conversion of 2-decaprenyl-6-methoxy-1,4-benzoquinol (DDMQH2) to 2-decaprenyl-3-methyl-6-methoxy-1,4-benzoquinol (DMQH2). The chain is 2-methoxy-6-polyprenyl-1,4-benzoquinol methylase, mitochondrial from Bos taurus (Bovine).